Here is a 185-residue protein sequence, read N- to C-terminus: UPF0397 protein PAM_019 (185 aa).

Transmembrane regions (helical) follow at residues 13 to 33 (IGLS…PVGF), 42 to 62 (AFLA…VGLI), 69 to 89 (FILF…IGFI), 109 to 129 (IVYF…FFAP), and 143 to 163 (VYLQ…VVGI).

Belongs to the UPF0397 family.

It is found in the cell membrane. This is UPF0397 protein PAM_019 from Onion yellows phytoplasma (strain OY-M).